Consider the following 119-residue polypeptide: Large ribosomal subunit protein bL20 (119 aa).

It belongs to the bacterial ribosomal protein bL20 family.

Functionally, binds directly to 23S ribosomal RNA and is necessary for the in vitro assembly process of the 50S ribosomal subunit. It is not involved in the protein synthesizing functions of that subunit. The sequence is that of Large ribosomal subunit protein bL20 from Gloeobacter violaceus (strain ATCC 29082 / PCC 7421).